The sequence spans 355 residues: Holliday junction branch migration complex subunit RuvB (355 aa).

The segment at 4–195 is large ATPase domain (RuvB-L); sequence TDKLTGADRL…FGIVARLEFY (192 aa). Residues L34, R35, G76, K79, T80, T81, 142 to 144, R185, Y195, and R232 contribute to the ATP site; that span reads EDY. T80 provides a ligand contact to Mg(2+). Positions 196 to 266 are small ATPAse domain (RuvB-S); that stretch reads TPDELARIVA…LADAALEMLD (71 aa). The tract at residues 269 to 355 is head domain (RuvB-H); sequence SVGFDLMDRK…DGGADLAEGL (87 aa). Positions 305, 324, and 329 each coordinate DNA.

The protein belongs to the RuvB family. Homohexamer. Forms an RuvA(8)-RuvB(12)-Holliday junction (HJ) complex. HJ DNA is sandwiched between 2 RuvA tetramers; dsDNA enters through RuvA and exits via RuvB. An RuvB hexamer assembles on each DNA strand where it exits the tetramer. Each RuvB hexamer is contacted by two RuvA subunits (via domain III) on 2 adjacent RuvB subunits; this complex drives branch migration. In the full resolvosome a probable DNA-RuvA(4)-RuvB(12)-RuvC(2) complex forms which resolves the HJ.

It is found in the cytoplasm. The enzyme catalyses ATP + H2O = ADP + phosphate + H(+). Functionally, the RuvA-RuvB-RuvC complex processes Holliday junction (HJ) DNA during genetic recombination and DNA repair, while the RuvA-RuvB complex plays an important role in the rescue of blocked DNA replication forks via replication fork reversal (RFR). RuvA specifically binds to HJ cruciform DNA, conferring on it an open structure. The RuvB hexamer acts as an ATP-dependent pump, pulling dsDNA into and through the RuvAB complex. RuvB forms 2 homohexamers on either side of HJ DNA bound by 1 or 2 RuvA tetramers; 4 subunits per hexamer contact DNA at a time. Coordinated motions by a converter formed by DNA-disengaged RuvB subunits stimulates ATP hydrolysis and nucleotide exchange. Immobilization of the converter enables RuvB to convert the ATP-contained energy into a lever motion, pulling 2 nucleotides of DNA out of the RuvA tetramer per ATP hydrolyzed, thus driving DNA branch migration. The RuvB motors rotate together with the DNA substrate, which together with the progressing nucleotide cycle form the mechanistic basis for DNA recombination by continuous HJ branch migration. Branch migration allows RuvC to scan DNA until it finds its consensus sequence, where it cleaves and resolves cruciform DNA. In Cupriavidus metallidurans (strain ATCC 43123 / DSM 2839 / NBRC 102507 / CH34) (Ralstonia metallidurans), this protein is Holliday junction branch migration complex subunit RuvB.